The sequence spans 136 residues: NADH-ubiquinone oxidoreductase chain 2 (136 aa).

The next 4 membrane-spanning stretches (helical) occupy residues 12–32, 34–54, 74–94, and 99–119; these read YFLI…NQSF, FLIP…MWLV, IGPL…WLMV, and FLLM…AVIL.

It belongs to the complex I subunit 2 family.

It localises to the mitochondrion inner membrane. It carries out the reaction a ubiquinone + NADH + 5 H(+)(in) = a ubiquinol + NAD(+) + 4 H(+)(out). In terms of biological role, core subunit of the mitochondrial membrane respiratory chain NADH dehydrogenase (Complex I) that is believed to belong to the minimal assembly required for catalysis. Complex I functions in the transfer of electrons from NADH to the respiratory chain. The immediate electron acceptor for the enzyme is believed to be ubiquinone. The polypeptide is NADH-ubiquinone oxidoreductase chain 2 (ND2) (Artemia salina (Brine shrimp)).